A 149-amino-acid chain; its full sequence is Myoglobin (149 aa).

A2 carries the N-acetylalanine modification. Positions 2–143 (ADWDKVNSVW…ICSDIEKEYK (142 aa)) constitute a Globin domain. H89 provides a ligand contact to heme b.

It belongs to the globin family. As to quaternary structure, monomeric.

It is found in the cytoplasm. The protein resides in the sarcoplasm. It carries out the reaction Fe(III)-heme b-[protein] + nitric oxide + H2O = Fe(II)-heme b-[protein] + nitrite + 2 H(+). It catalyses the reaction H2O2 + AH2 = A + 2 H2O. In terms of biological role, monomeric heme protein which primary function is to store oxygen and facilitate its diffusion within muscle tissues. Reversibly binds oxygen through a pentacoordinated heme iron and enables its timely and efficient release as needed during periods of heightened demand. Depending on the oxidative conditions of tissues and cells, and in addition to its ability to bind oxygen, it also has a nitrite reductase activity whereby it regulates the production of bioactive nitric oxide. Under stress conditions, like hypoxia and anoxia, it also protects cells against reactive oxygen species thanks to its pseudoperoxidase activity. This Galeorhinus galeus (Tope shark) protein is Myoglobin (mb).